Reading from the N-terminus, the 311-residue chain is Aspartate carbamoyltransferase catalytic subunit (311 aa).

Residues Arg58 and Thr59 each contribute to the carbamoyl phosphate site. Lys86 serves as a coordination point for L-aspartate. 3 residues coordinate carbamoyl phosphate: Arg108, His136, and Gln139. 2 residues coordinate L-aspartate: Arg169 and Arg224. Residues Gly265 and Pro266 each contribute to the carbamoyl phosphate site.

The protein belongs to the aspartate/ornithine carbamoyltransferase superfamily. ATCase family. In terms of assembly, heterododecamer (2C3:3R2) of six catalytic PyrB chains organized as two trimers (C3), and six regulatory PyrI chains organized as three dimers (R2).

It carries out the reaction carbamoyl phosphate + L-aspartate = N-carbamoyl-L-aspartate + phosphate + H(+). It participates in pyrimidine metabolism; UMP biosynthesis via de novo pathway; (S)-dihydroorotate from bicarbonate: step 2/3. Functionally, catalyzes the condensation of carbamoyl phosphate and aspartate to form carbamoyl aspartate and inorganic phosphate, the committed step in the de novo pyrimidine nucleotide biosynthesis pathway. This Geobacter sulfurreducens (strain ATCC 51573 / DSM 12127 / PCA) protein is Aspartate carbamoyltransferase catalytic subunit.